Reading from the N-terminus, the 215-residue chain is Pyrrolidone-carboxylate peptidase (215 aa).

Residues E78, C141, and H165 contribute to the active site.

The protein belongs to the peptidase C15 family. As to quaternary structure, homotetramer.

The protein localises to the cytoplasm. It catalyses the reaction Release of an N-terminal pyroglutamyl group from a polypeptide, the second amino acid generally not being Pro.. Its function is as follows. Removes 5-oxoproline from various penultimate amino acid residues except L-proline. This is Pyrrolidone-carboxylate peptidase from Streptococcus pyogenes serotype M3 (strain SSI-1).